The chain runs to 593 residues: Serine/threonine-protein kinase PAK 4 (593 aa).

One can recognise a CRIB domain in the interval 11 to 24; that stretch reads ISAPSNFEHRVHTG. The tract at residues 25-322 is linker; the sequence is FDQHEQKFTG…VVDPGDPRSY (298 aa). A Phosphoserine modification is found at Ser41. N6-methyllysine is present on Lys78. Residues 95 to 303 form a disordered region; that stretch reads TRSNSLRRES…PQREPQRVSH (209 aa). Residue Ser104 is modified to Phosphoserine. Residues 118–133 show a composition bias toward basic and acidic residues; sequence LEERAAPARMAPDKAG. At Ser148 the chain carries Phosphoserine. The span at 149–164 shows a compositional bias: basic and acidic residues; the sequence is GDRRRVGPEKRPKSSR. The residue at position 181 (Ser181) is a Phosphoserine. The segment covering 184-197 has biased composition (polar residues); sequence DVSTPQPGSLTSGT. Thr187 carries the phosphothreonine modification. Ser195 carries the phosphoserine modification. Position 207 is a phosphothreonine (Thr207). A compositionally biased stretch (low complexity) spans 238-258; it reads AAPQSSSSSRPPTRARGAPSP. Phosphoserine is present on residues Ser257 and Ser266. A compositionally biased stretch (low complexity) spans 267-280; the sequence is EPQLAPPARALAAP. A compositionally biased stretch (pro residues) spans 281–292; sequence AVPPAPGPPGPR. Position 293 is a phosphoserine (Ser293). A compositionally biased stretch (basic and acidic residues) spans 294-303; the sequence is PQREPQRVSH. The 252-residue stretch at 323 to 574 folds into the Protein kinase domain; the sequence is LDNFIKIGEG…AAELLKHPFL (252 aa). Residues 329–337 and Lys352 contribute to the ATP site; that span reads IGEGSTGIV. The active-site Proton acceptor is the Asp442. Ser476 is subject to Phosphoserine; by autocatalysis.

Belongs to the protein kinase superfamily. STE Ser/Thr protein kinase family. STE20 subfamily. Interacts tightly with GTP-bound but not GDP-bound CDC42/p21 and weakly with RAC1. Interacts with FGFR2 and GRB2. Interacts with INKA1. Interacts with SH3RF2. Interacts with RHOU and PAXI; the PAK4-RHOU complex protects RHOU from ubiquitination and acts as a scaffold to suppport paxillin/PAXI phosphorylation. Post-translationally, autophosphorylated on serine residues when activated by CDC42/p21. Phosphorylated on tyrosine residues upon stimulation of FGFR2. Methylated by SETD6. In terms of processing, polyubiquitinated, leading to its proteasomal degradation.

It is found in the cytoplasm. The catalysed reaction is L-seryl-[protein] + ATP = O-phospho-L-seryl-[protein] + ADP + H(+). The enzyme catalyses L-threonyl-[protein] + ATP = O-phospho-L-threonyl-[protein] + ADP + H(+). Inhibited by INKA1; which inhibits the serine/threonine-protein kinase activity by binding PAK4 in a substrate-like manner. Serine/threonine protein kinase that plays a role in a variety of different signaling pathways including cytoskeleton regulation, cell migration, growth, proliferation or cell survival. Activation by various effectors including growth factor receptors or active CDC42 and RAC1 results in a conformational change and a subsequent autophosphorylation on several serine and/or threonine residues. Phosphorylates and inactivates the protein phosphatase SSH1, leading to increased inhibitory phosphorylation of the actin binding/depolymerizing factor cofilin. Decreased cofilin activity may lead to stabilization of actin filaments. Phosphorylates LIMK1, a kinase that also inhibits the activity of cofilin. Phosphorylates integrin beta5/ITGB5 and thus regulates cell motility. Phosphorylates ARHGEF2 and activates the downstream target RHOA that plays a role in the regulation of assembly of focal adhesions and actin stress fibers. Stimulates cell survival by phosphorylating the BCL2 antagonist of cell death BAD. Alternatively, inhibits apoptosis by preventing caspase-8 binding to death domain receptors in a kinase independent manner. Plays a role in cell-cycle progression by controlling levels of the cell-cycle regulatory protein CDKN1A and by phosphorylating RAN. Promotes kinase-independent stabilization of RHOU, thereby contributing to focal adhesion disassembly during cell migration. The chain is Serine/threonine-protein kinase PAK 4 from Mus musculus (Mouse).